The following is a 66-amino-acid chain: U8-myrmicitoxin-Tb1a (66 aa).

The signal sequence occupies residues 1 to 26 (MKLSFLSLAFAVIFVMAIMYAPQVEA). Positions 27–50 (KASADADADADAAASADALAKASA) are excised as a propeptide.

As to expression, expressed by the venom gland.

Its subcellular location is the secreted. In vivo, this neurotoxin paralyzes about 50% of blowflies (L.caesar) one hour after intrathoracic injection, when tested at high doses (54 nmol/g). The sequence is that of U8-myrmicitoxin-Tb1a from Tetramorium bicarinatum (Tramp ant).